The following is a 560-amino-acid chain: Calcium-binding and coiled-coil domain-containing protein 1-A (560 aa).

Coiled-coil stretches lie at residues 156-192 (KATF…EKRI) and 367-480 (WWQE…DKML). The tract at residues 480 to 517 (LMEDKTDSSPPTLSVDLSDSDDESPGDEGVSQQLGPCS) is disordered. Over residues 487–496 (SSPPTLSVDL) the composition is skewed to low complexity.

This sequence belongs to the CALCOCO family.

The protein localises to the cytoplasm. Its subcellular location is the nucleus. In terms of biological role, may function as a coactivator for aryl hydrocarbon and nuclear receptors. This Xenopus laevis (African clawed frog) protein is Calcium-binding and coiled-coil domain-containing protein 1-A (calcoco1-a).